Here is a 450-residue protein sequence, read N- to C-terminus: UDP-N-acetylmuramate--L-alanine ligase (450 aa).

An ATP-binding site is contributed by 112–118 (GTHGKTT).

It belongs to the MurCDEF family.

Its subcellular location is the cytoplasm. It catalyses the reaction UDP-N-acetyl-alpha-D-muramate + L-alanine + ATP = UDP-N-acetyl-alpha-D-muramoyl-L-alanine + ADP + phosphate + H(+). The protein operates within cell wall biogenesis; peptidoglycan biosynthesis. In terms of biological role, cell wall formation. This Endomicrobium trichonymphae protein is UDP-N-acetylmuramate--L-alanine ligase.